The primary structure comprises 714 residues: Phosphate acetyltransferase (714 aa).

Positions A390–Q714 are phosphate acetyltransferase.

It in the N-terminal section; belongs to the CobB/CobQ family. This sequence in the C-terminal section; belongs to the phosphate acetyltransferase and butyryltransferase family. As to quaternary structure, homohexamer.

It localises to the cytoplasm. It carries out the reaction acetyl-CoA + phosphate = acetyl phosphate + CoA. The catalysed reaction is propanoyl-CoA + phosphate = propanoyl phosphate + CoA. It participates in metabolic intermediate biosynthesis; acetyl-CoA biosynthesis; acetyl-CoA from acetate: step 2/2. With respect to regulation, allosterically inhibited by NADH. In terms of biological role, involved in acetate metabolism. Catalyzes the reversible interconversion of acetyl-CoA and acetyl phosphate. The direction of the overall reaction changes depending on growth conditions. Required for acetate recapture but not for acetate excretion when this organism is grown on ethanolamine (EA); is unable to complement an eutD deletion during growth on EA. Works with proprionate kinase PduW to capture exogenous propionate and regenerate propionyl-CoA during degradation of propionate and 1,2-propanediol (1,2-PD). This chain is Phosphate acetyltransferase (pta), found in Salmonella typhimurium (strain LT2 / SGSC1412 / ATCC 700720).